The sequence spans 134 residues: MKSVITISASLAISLMLCCTAQANDHKILGVIAMPRNETNDLALKLPVCRIVKRIQLSADHGDLQLSGASIYFKATRSASQTLNIPSEIKEEQTTDWININSDNDNKRCVSKITFSGHTVNSSDMATLKIIGDD.

The signal sequence occupies residues 1–23 (MKSVITISASLAISLMLCCTAQA).

It belongs to the UPF0412 family.

The polypeptide is UPF0412 protein YaaI (Escherichia coli (strain UTI89 / UPEC)).